Reading from the N-terminus, the 296-residue chain is GTPase Era (296 aa).

The 167-residue stretch at 7-173 (KAGFVSIIGR…VDLVREHLPE (167 aa)) folds into the Era-type G domain. Positions 15-22 (GRPNVGKS) are G1. Residue 15–22 (GRPNVGKS) coordinates GTP. The interval 41 to 45 (QTTRN) is G2. Residues 62–65 (DTPG) form a G3 region. Residues 62-66 (DTPGI) and 122-125 (NKID) each bind GTP. The tract at residues 122-125 (NKID) is G4. Positions 152–154 (ISA) are G5. The region spanning 204-281 (TNREVPYGTA…YLELFVQVQE (78 aa)) is the KH type-2 domain.

It belongs to the TRAFAC class TrmE-Era-EngA-EngB-Septin-like GTPase superfamily. Era GTPase family. In terms of assembly, monomer.

It is found in the cytoplasm. The protein resides in the cell inner membrane. Functionally, an essential GTPase that binds both GDP and GTP, with rapid nucleotide exchange. Plays a role in 16S rRNA processing and 30S ribosomal subunit biogenesis and possibly also in cell cycle regulation and energy metabolism. This Trichlorobacter lovleyi (strain ATCC BAA-1151 / DSM 17278 / SZ) (Geobacter lovleyi) protein is GTPase Era.